Reading from the N-terminus, the 514-residue chain is 2,3-bisphosphoglycerate-independent phosphoglycerate mutase (514 aa).

Residues aspartate 13 and serine 63 each coordinate Mn(2+). The Phosphoserine intermediate role is filled by serine 63. Residues histidine 124, 154-155 (RD), arginine 186, arginine 192, 258-261 (RADR), and lysine 332 contribute to the substrate site. The Mn(2+) site is built by aspartate 399, histidine 403, aspartate 440, histidine 441, and histidine 459.

This sequence belongs to the BPG-independent phosphoglycerate mutase family. In terms of assembly, monomer. Requires Mn(2+) as cofactor.

It catalyses the reaction (2R)-2-phosphoglycerate = (2R)-3-phosphoglycerate. It participates in carbohydrate degradation; glycolysis; pyruvate from D-glyceraldehyde 3-phosphate: step 3/5. Its function is as follows. Catalyzes the interconversion of 2-phosphoglycerate and 3-phosphoglycerate. In Legionella pneumophila (strain Lens), this protein is 2,3-bisphosphoglycerate-independent phosphoglycerate mutase.